The chain runs to 250 residues: 2,3-bisphosphoglycerate-dependent phosphoglycerate mutase (250 aa).

Substrate contacts are provided by residues 8 to 15 (RHGESTWN), 21 to 22 (TG), Arg60, 87 to 90 (ERHY), Lys98, and 114 to 115 (RR). The active-site Tele-phosphohistidine intermediate is His9. Glu87 serves as the catalytic Proton donor/acceptor. Residues 116–135 (SYDTPPPPLAANDPRSERSD) are disordered. 183-184 (GN) contributes to the substrate binding site.

It belongs to the phosphoglycerate mutase family. BPG-dependent PGAM subfamily. As to quaternary structure, homodimer.

It carries out the reaction (2R)-2-phosphoglycerate = (2R)-3-phosphoglycerate. The protein operates within carbohydrate degradation; glycolysis; pyruvate from D-glyceraldehyde 3-phosphate: step 3/5. Catalyzes the interconversion of 2-phosphoglycerate and 3-phosphoglycerate. In Polaromonas naphthalenivorans (strain CJ2), this protein is 2,3-bisphosphoglycerate-dependent phosphoglycerate mutase.